The sequence spans 193 residues: MTEYLLLFVGTVLVNNFVLVKFLGLCPFMGVSKKLETAIGMGLATTFVLTLASVCAWMVNSFILLPLGLIYLRTLAFILVIAVVVQFTELVVRKTSPTLYRLLGIFLPLITTNCAVLGVALLNVNQSHNFMQSAVYGFSAAAGFSLVMVLFAAIRERLAVADVPAPFRGSSIALITAGLMSLAFMGFTGLVKF.

6 helical membrane-spanning segments follow: residues 5 to 25 (LLLF…FLGL), 39 to 59 (IGMG…AWMV), 62 to 82 (FILL…LVIA), 102 to 122 (LLGI…VALL), 134 to 154 (AVYG…FAAI), and 171 to 191 (SIAL…TGLV).

Belongs to the NqrDE/RnfAE family. In terms of assembly, the complex is composed of six subunits: RnfA, RnfB, RnfC, RnfD, RnfE and RnfG.

The protein localises to the cell inner membrane. In terms of biological role, part of a membrane-bound complex that couples electron transfer with translocation of ions across the membrane. The protein is Ion-translocating oxidoreductase complex subunit A of Yersinia pestis bv. Antiqua (strain Nepal516).